Here is a 938-residue protein sequence, read N- to C-terminus: RIPOR family member 3 (938 aa).

S9, S24, and S340 each carry phosphoserine. T345 bears the Phosphothreonine mark. S351 and S384 each carry phosphoserine. Disordered regions lie at residues 402-430 (EMDS…FLPV) and 579-603 (FGGS…SPSE).

Belongs to the RIPOR family.

This Mus musculus (Mouse) protein is RIPOR family member 3.